A 521-amino-acid chain; its full sequence is Protein nucleotidyltransferase YdiU (521 aa).

ATP is bound by residues Gly109, Gly111, Arg112, Lys131, Asp143, Gly144, Arg194, and Arg201. Asp270 acts as the Proton acceptor in catalysis. Residues Asn271 and Asp280 each coordinate Mg(2+). Residue Asp280 participates in ATP binding.

Belongs to the SELO family. The cofactor is Mg(2+). It depends on Mn(2+) as a cofactor.

The enzyme catalyses L-seryl-[protein] + ATP = 3-O-(5'-adenylyl)-L-seryl-[protein] + diphosphate. It catalyses the reaction L-threonyl-[protein] + ATP = 3-O-(5'-adenylyl)-L-threonyl-[protein] + diphosphate. The catalysed reaction is L-tyrosyl-[protein] + ATP = O-(5'-adenylyl)-L-tyrosyl-[protein] + diphosphate. It carries out the reaction L-histidyl-[protein] + UTP = N(tele)-(5'-uridylyl)-L-histidyl-[protein] + diphosphate. The enzyme catalyses L-seryl-[protein] + UTP = O-(5'-uridylyl)-L-seryl-[protein] + diphosphate. It catalyses the reaction L-tyrosyl-[protein] + UTP = O-(5'-uridylyl)-L-tyrosyl-[protein] + diphosphate. Its function is as follows. Nucleotidyltransferase involved in the post-translational modification of proteins. It can catalyze the addition of adenosine monophosphate (AMP) or uridine monophosphate (UMP) to a protein, resulting in modifications known as AMPylation and UMPylation. This chain is Protein nucleotidyltransferase YdiU, found in Burkholderia pseudomallei (strain 1106a).